Consider the following 132-residue polypeptide: Fatty acid-binding protein 2 (132 aa).

Ser-2 is modified (N-acetylserine). Hexadecanoate-binding positions include Gln-40 and 128–130 (RYY).

Belongs to the calycin superfamily. Fatty-acid binding protein (FABP) family. In terms of assembly, monomer. Midgut.

It localises to the cytoplasm. Functionally, binds fatty acids in a 1:1 molar ratio. The polypeptide is Fatty acid-binding protein 2 (MFB2) (Manduca sexta (Tobacco hawkmoth)).